A 235-amino-acid chain; its full sequence is 6-carboxyhexanoate--CoA ligase (235 aa).

Belongs to the BioW family. Homodimer. It depends on Mg(2+) as a cofactor.

It catalyses the reaction heptanedioate + ATP + CoA = 6-carboxyhexanoyl-CoA + AMP + diphosphate. Its pathway is metabolic intermediate metabolism; pimeloyl-CoA biosynthesis; pimeloyl-CoA from pimelate: step 1/1. Functionally, catalyzes the transformation of pimelate into pimeloyl-CoA with concomitant hydrolysis of ATP to AMP. This Desulfovibrio desulfuricans (strain ATCC 27774 / DSM 6949 / MB) protein is 6-carboxyhexanoate--CoA ligase.